A 381-amino-acid polypeptide reads, in one-letter code: Spindlin interactor and repressor of chromatin-binding protein (381 aa).

A Glycyl lysine isopeptide (Lys-Gly) (interchain with G-Cter in SUMO2) cross-link involves residue Lys49. 2 positions are modified to phosphoserine: Ser122 and Ser149. Positions 148–158 (PSLPSLESGQD) are enriched in polar residues. The segment at 148–170 (PSLPSLESGQDGQPDPISNPDPV) is disordered. Glycyl lysine isopeptide (Lys-Gly) (interchain with G-Cter in SUMO2) cross-links involve residues Lys190 and Lys221. Disordered regions lie at residues 203–270 (PVTP…TDGS), 285–320 (LRTTDCKDSSKDSRAAEGLPQPQNPSSASPPGLRGT), and 335–381 (AVSL…GSGV). Residues 219–229 (RWKESPENEPA) are compositionally biased toward basic and acidic residues. Residues Ser249 and Ser252 each carry the phosphoserine modification. Residues 288-299 (TDCKDSSKDSRA) are compositionally biased toward basic and acidic residues. Residues Lys291 and Lys295 each participate in a glycyl lysine isopeptide (Lys-Gly) (interchain with G-Cter in SUMO2) cross-link. The span at 304-315 (PQPQNPSSASPP) shows a compositional bias: low complexity. 2 positions are modified to phosphoserine: Ser310 and Ser313.

Interacts with SPIN1, SPIN2A, SPIN2B, SPIN3 and SPIN4. Interacts with TCF7L2 in a SPIN1-dependent manner. Interacts with PARP1; promoting PARP1 ADP-ribosyltransferase activity.

The protein localises to the nucleus. Its subcellular location is the chromosome. Its function is as follows. Chromatin protein that stabilizes SPIN1 and enhances its association with histone H3 trimethylated at both 'Lys-4' and 'Lys-9' (H3K4me3K9me3). Positively regulates poly-ADP-ribosylation in response to DNA damage; acts by facilitating PARP1 ADP-ribosyltransferase activity. This is Spindlin interactor and repressor of chromatin-binding protein from Mus musculus (Mouse).